A 129-amino-acid chain; its full sequence is uncharacterized protein (129 aa).

Residues 52-94 form a disordered region; the sequence is NGDEESQDDWLNDLLKSDGDGGKAGPVDPSHPMETTTTDHSSQ. The span at 53-62 shows a compositional bias: acidic residues; it reads GDEESQDDWL. Positions 84-94 are enriched in polar residues; sequence METTTTDHSSQ.

This is an uncharacterized protein from Caenorhabditis elegans.